The primary structure comprises 425 residues: MDDDNGLELSLGLSCGGSTGKAKGNNNNNAGSSSENYRAEGGDRSAKVIDDFKNFLHPTSQRPAEPSSGSQRSDSGQQPPQNFFNDLSKAPTTEAEASTKPLWVEDESRKEAGNKRKFGFPGMNDDKKKEKDSSHVDMHEKKTKASHVSTATDEGSTAENEDVAESEVGGGSSSNHAKEVVRPPTDTNIVDNLTGQRRSNHGGSGTEEFTMRNMSYTVPFTVHPQNVVTSMPYSLPTKESGQHAAATSLLQPNANAGNLPIMFGYSPVQLPMLDKDGSGGIVALSQSPFAGRVPSNSATAKGEGKQPVAEEGSSEDASERPTGDNSNLNTAFSFDFSAIKPGMAADVKFGGSGARPNLPWVSTTGSGPHGRTISGVTYRYNANQIKIVCACHGSHMSPEEFVRHASEEYVSPESSMGMTAASAHT.

2 disordered regions span residues 1 to 207 and 288 to 327; these read MDDD…SGTE and PFAGRVPSNSATAKGEGKQPVAEEGSSEDASERPTGDNSN. The tract at residues 7-17 is necessary and sufficient for the interaction with TOPLESS; it reads LELSLGLSCGG. Low complexity predominate over residues 20–34; sequence GKAKGNNNNNAGSSS. A compositionally biased stretch (basic and acidic residues) spans 37-54; sequence YRAEGGDRSAKVIDDFKN. Low complexity predominate over residues 66-81; it reads PSSGSQRSDSGQQPPQ. A compositionally biased stretch (basic and acidic residues) spans 124-140; the sequence is NDDKKKEKDSSHVDMHE. Composition is skewed to polar residues over residues 146–158, 185–197, and 288–299; these read SHVSTATDEGSTA, TDTNIVDNLTGQR, and PFAGRVPSNSAT. A necessary and sufficient for the interaction with the JAZ proteins region spans residues 322–425; that stretch reads TGDNSNLNTA…MGMTAASAHT (104 aa).

The protein belongs to the Ninja family. Component of a complex at least composed of TOPLESS, TPR2, TPR3, TIFY4B/PPD2, MYC3/ATR2 and TIFY3B/JAZ12. Interacts (via C-terminus) with TIFY10A/JAZ1; TIFY10B/JAZ2; TIFY6B/JAZ3; TIFY6A/JAZ4; TIFY11A/JAZ5; TIFY11B/JAZ6; TIFY7/JAZ9; TIFY9/JAZ10; TIFY3A/JAZ11; TIFY3B/JAZ12; TIFY4A/PPD1; TIFY4B/PPD2 and TIFY8 (via TIFY domain). Interacts with TOPLESS. Interacts with PAT1H1.

The protein localises to the nucleus. In terms of biological role, acts as a transcriptional repressor. Negative regulator of jasmonate responses. Connects the JAZ proteins and the non-JAZ protein TIFY8 with the TOPLESS corepressors. The protein is AFP homolog 2 of Arabidopsis thaliana (Mouse-ear cress).